The following is a 580-amino-acid chain: RuBisCO large subunit-binding protein subunit alpha, chloroplastic (580 aa).

Polar residues predominate over residues 1–17 (MAQSQLAKGSRQTTGRP). A disordered region spans residues 1-24 (MAQSQLAKGSRQTTGRPFQNKPAR).

The protein belongs to the chaperonin (HSP60) family. As to quaternary structure, oligomer of probably six alpha and six beta subunits.

Its subcellular location is the plastid. The protein localises to the chloroplast. In terms of biological role, this protein binds RuBisCO small and large subunits and is implicated in the assembly of the enzyme oligomer. This is RuBisCO large subunit-binding protein subunit alpha, chloroplastic from Chlamydomonas reinhardtii (Chlamydomonas smithii).